We begin with the raw amino-acid sequence, 631 residues long: Probable glutamate--tRNA ligase, cytoplasmic (631 aa).

139-141 (RFP) is an L-glutamate binding site. Residues 144-153 (PSGFLHIGHI) carry the 'HIGH' region motif. H149 contacts ATP. Residues D173, 311-315 (YDFAC), and R329 contribute to the L-glutamate site. ATP is bound by residues E332 and 367–371 (VLSKR). Residues 367–371 (VLSKR) carry the 'KMSKS' region motif.

This sequence belongs to the class-I aminoacyl-tRNA synthetase family. Glutamate--tRNA ligase type 2 subfamily.

Its subcellular location is the cytoplasm. It carries out the reaction tRNA(Glu) + L-glutamate + ATP = L-glutamyl-tRNA(Glu) + AMP + diphosphate. This is Probable glutamate--tRNA ligase, cytoplasmic from Enterocytozoon bieneusi (strain H348) (Microsporidian parasite).